A 795-amino-acid chain; its full sequence is RINT1-like protein MAG2 (795 aa).

Positions 35-64 (TGLVSELQTEISELDQRLAGLNRQLESGLA) form a coiled coil. Residues 91-111 (TSVTRSASDSGKEEEATEHVA) form a disordered region. The span at 100 to 111 (SGKEEEATEHVA) shows a compositional bias: basic and acidic residues. The 589-residue stretch at 207 to 795 (ALAMMRPQAI…KKVAKSRVFS (589 aa)) folds into the RINT1/TIP20 domain.

Belongs to the RINT1 family. Interacts with SEC20 and SYP81. Interacts with ZW10 (via the central region). Forms a complex with ZW10/MIP1, MIP2 and MIP3 on the endoplasmic reticulum. In terms of tissue distribution, highly expressed in dry seeds. Expressed at low levels in roots, rosette and cauline leaves, stems and flowers.

It localises to the endoplasmic reticulum membrane. Functionally, functions in the anterograde transport of storage protein precursors from the endoplasmic reticulum (ER) to the Golgi complex and in the retrograde transport from the Golgi complex to the ER. Forms a complex with ZW10/MIP1, MIP2 and MIP3 on the ER that may be responsible for efficient transport of seed storage proteins. Required for the responses to environmental stresses during seed germination and vegetative growth. Probably not involved in the retrograde transport from the ER to the apoplast. This is RINT1-like protein MAG2 from Arabidopsis thaliana (Mouse-ear cress).